The chain runs to 854 residues: Translation initiation factor IF-2 (854 aa).

2 disordered regions span residues 52 to 79 (RQHG…RDGG) and 128 to 265 (RKQE…HGFQ). Positions 61-75 (SQRITLQRKTTSTLS) are enriched in polar residues. 2 stretches are compositionally biased toward basic and acidic residues: residues 128–150 (RKQE…RQEA) and 211–232 (VRHD…DNKR). Basic residues predominate over residues 247–257 (RGKLGRKNKKP). Residues 354 to 523 (KRAPVVTVMG…LLQAEVLELT (170 aa)) form the tr-type G domain. Positions 363–370 (GHVDHGKT) are G1. 363-370 (GHVDHGKT) lines the GTP pocket. Residues 388-392 (GITQH) form a G2 region. Positions 409–412 (DTPG) are G3. 409–413 (DTPGH) contributes to the GTP binding site. The interval 463 to 466 (TKID) is G4. Residues 499 to 501 (SAK) form a G5 region.

The protein belongs to the TRAFAC class translation factor GTPase superfamily. Classic translation factor GTPase family. IF-2 subfamily.

It is found in the cytoplasm. Its function is as follows. One of the essential components for the initiation of protein synthesis. Protects formylmethionyl-tRNA from spontaneous hydrolysis and promotes its binding to the 30S ribosomal subunits. Also involved in the hydrolysis of GTP during the formation of the 70S ribosomal complex. This is Translation initiation factor IF-2 from Marinomonas sp. (strain MWYL1).